A 188-amino-acid chain; its full sequence is MSIKSDKWIRRMAEQQGMIAPFAPELVRSNEGGKIVSYGTSSYGYDVRCANEFKIFTNINSTIVDPKDFDARNFVDFVGDVCIIPPNSFALARTVEFFRIPRNVLTVCLGKSTYARCGIIVNVTPLEPEWEGHVTLEFSNTTPLPAKIYANEGVAQMLFFESDEECETSYKDRGGKYFGQTGVTLPKI.

DCTP is bound by residues 111 to 116 (KSTYAR), 135 to 137 (TLE), Gln-156, Tyr-170, and Gln-180. Catalysis depends on Glu-137, which acts as the Proton donor/acceptor.

The protein belongs to the dCTP deaminase family. As to quaternary structure, homotrimer.

It carries out the reaction dCTP + H2O + H(+) = dUTP + NH4(+). Its pathway is pyrimidine metabolism; dUMP biosynthesis; dUMP from dCTP (dUTP route): step 1/2. Catalyzes the deamination of dCTP to dUTP. The sequence is that of dCTP deaminase from Azoarcus sp. (strain BH72).